The primary structure comprises 319 residues: Ribosomal RNA small subunit methyltransferase H (319 aa).

S-adenosyl-L-methionine contacts are provided by residues 35-37, Asp-55, Phe-84, Asp-104, and Gln-111; that span reads AGH.

It belongs to the methyltransferase superfamily. RsmH family.

It is found in the cytoplasm. It carries out the reaction cytidine(1402) in 16S rRNA + S-adenosyl-L-methionine = N(4)-methylcytidine(1402) in 16S rRNA + S-adenosyl-L-homocysteine + H(+). Specifically methylates the N4 position of cytidine in position 1402 (C1402) of 16S rRNA. The protein is Ribosomal RNA small subunit methyltransferase H of Enterococcus hirae.